Reading from the N-terminus, the 563-residue chain is Glucocorticoid modulatory element-binding protein 1 (563 aa).

Ala-2 is subject to N-acetylalanine. Positions 72–156 constitute an SAND domain; it reads ASTIEANEDM…RKMMDSGQID (85 aa). Residue Cys-103 participates in Zn(2+) binding. DNA-binding residues include Lys-129, Lys-133, Lys-136, and Arg-147. Zn(2+)-binding residues include His-160, Cys-164, and Cys-168. A coiled-coil region spans residues 304-355; it reads MDTVKKVLDNRKNQVEQGEEQFLYTLTDLERQLEEQKKQAQDHRLKSQTVQN. The disordered stretch occupies residues 360–385; that stretch reads PVSTPKPPKRPRLQRPASTTVLSPSP.

In terms of assembly, homodimer, and heterodimer of GMEB1 and GMEB2. Interacts with TRIM63. Interacts with the glucocorticoid receptor (NR3C1) and NCOA2/TIF2. May interact with HSP27 and CREB-binding protein (CBP).

It localises to the nucleus. Its subcellular location is the cytoplasm. Functionally, trans-acting factor that binds to glucocorticoid modulatory elements (GME) present in the TAT (tyrosine aminotransferase) promoter and increases sensitivity to low concentrations of glucocorticoids. Also binds to the transferrin receptor promoter. This Bos taurus (Bovine) protein is Glucocorticoid modulatory element-binding protein 1 (GMEB1).